The primary structure comprises 491 residues: Regulatory protein NPR5 (491 aa).

In terms of domain architecture, BTB spans 26–116; that stretch reads SDVTFSVEGR…LYSGQVSIVP (91 aa). Residues 122–136 form a C2HC NPR-type zinc finger; the sequence is RPNCGERGCWHTHCS. 4 residues coordinate Zn(2+): C125, C130, H132, and C135. ANK repeat units lie at residues 254–283, 284–313, 318–347, and 351–385; these read QKIR…LNLD, ESLA…DVNY, AGKT…DPNV, and GGIT…KLRL. Residues 400 to 491 are disordered; sequence EEGNNSNNQN…MYHHHHQHHF (92 aa). A compositionally biased stretch (low complexity) spans 403-413; the sequence is NNSNNQNNDNN. Residues 457 to 470 show a composition bias toward basic and acidic residues; the sequence is DQGDDHNSQREGMS.

It belongs to the plant 'ANKYRIN-BTB/POZ' family. 'NOOT-BOP-COCH-like' (NBCL) subfamily. Homodimer or heterodimer with BOP1. Interacts with PAN. In terms of tissue distribution, highly expressed in young floral meristem. Predominantly expressed in the boundary between floral meristem (FM) and sepal primordia.

It localises to the cytoplasm. The protein resides in the nucleus. It functions in the pathway protein modification; protein ubiquitination. May act as a substrate-specific adapter of an E3 ubiquitin-protein ligase complex (CUL3-RBX1-BTB) which mediates the ubiquitination and subsequent proteasomal degradation of target proteins. Acts redundantly with BOP2. BOP1/2 promote leaf and floral meristem fate and determinacy in a pathway targeting AP1 and AGL24. BOP1/2 act as transcriptional co-regulators through direct interaction with TGA factors, including PAN, a direct regulator of AP1. Controls lateral organ fate through positive regulation of adaxial-abaxial polarity genes ATHB-14/PHB, YAB1/FIL and YAB3, and through positive regulation of LOB domain-containing genes LOB, LBD6/AS2 and LBD36. Promotes and maintains a developmentally determinate state in leaf cells through the negative regulation of JAG, JGL and class I KNOX genes. Is also involved in nectary development, formation of normal abscission zones (AZs) and suppression of bract formation, probably by regulating the cell wall disorganization. The polypeptide is Regulatory protein NPR5 (Arabidopsis thaliana (Mouse-ear cress)).